A 573-amino-acid polypeptide reads, in one-letter code: ESX-1 secretion system protein EccA1 (573 aa).

Residue 334–341 (GPPGTGKT) participates in ATP binding.

This sequence belongs to the CbxX/CfxQ family. In terms of assembly, part of the ESX-1 / type VII secretion system (T7SS), which is composed of cytosolic and membrane components.

It is found in the cytoplasm. Part of the ESX-1 specialized secretion system, which delivers several virulence factors to host cells during infection, including the key virulence factors EsxA (ESAT-6) and EsxB (CFP-10). EccA1 exhibits ATPase activity and may provide energy for the export of ESX-1 substrates. The polypeptide is ESX-1 secretion system protein EccA1 (Mycobacterium tuberculosis (strain CDC 1551 / Oshkosh)).